Reading from the N-terminus, the 253-residue chain is Imidazole glycerol phosphate synthase subunit HisF (253 aa).

Active-site residues include Asp11 and Asp130.

Belongs to the HisA/HisF family. In terms of assembly, heterodimer of HisH and HisF.

The protein localises to the cytoplasm. It carries out the reaction 5-[(5-phospho-1-deoxy-D-ribulos-1-ylimino)methylamino]-1-(5-phospho-beta-D-ribosyl)imidazole-4-carboxamide + L-glutamine = D-erythro-1-(imidazol-4-yl)glycerol 3-phosphate + 5-amino-1-(5-phospho-beta-D-ribosyl)imidazole-4-carboxamide + L-glutamate + H(+). It functions in the pathway amino-acid biosynthesis; L-histidine biosynthesis; L-histidine from 5-phospho-alpha-D-ribose 1-diphosphate: step 5/9. IGPS catalyzes the conversion of PRFAR and glutamine to IGP, AICAR and glutamate. The HisF subunit catalyzes the cyclization activity that produces IGP and AICAR from PRFAR using the ammonia provided by the HisH subunit. In Lysinibacillus sphaericus (strain C3-41), this protein is Imidazole glycerol phosphate synthase subunit HisF.